Reading from the N-terminus, the 216-residue chain is Pyrrolidone-carboxylate peptidase (216 aa).

Active-site residues include E80, C143, and H167.

Belongs to the peptidase C15 family. As to quaternary structure, homotetramer.

The protein localises to the cytoplasm. It carries out the reaction Release of an N-terminal pyroglutamyl group from a polypeptide, the second amino acid generally not being Pro.. Removes 5-oxoproline from various penultimate amino acid residues except L-proline. The polypeptide is Pyrrolidone-carboxylate peptidase (pcp) (Streptomyces coelicolor (strain ATCC BAA-471 / A3(2) / M145)).